Consider the following 233-residue polypeptide: Orotidine 5'-phosphate decarboxylase (233 aa).

Substrate-binding positions include Asp12, Lys34, 61–70, Thr120, Arg181, Gln190, Gly210, and Arg211; that span reads DLKFHDIPNT. Lys63 acts as the Proton donor in catalysis.

Belongs to the OMP decarboxylase family. Type 1 subfamily. As to quaternary structure, homodimer.

It catalyses the reaction orotidine 5'-phosphate + H(+) = UMP + CO2. It participates in pyrimidine metabolism; UMP biosynthesis via de novo pathway; UMP from orotate: step 2/2. Functionally, catalyzes the decarboxylation of orotidine 5'-monophosphate (OMP) to uridine 5'-monophosphate (UMP). This Hahella chejuensis (strain KCTC 2396) protein is Orotidine 5'-phosphate decarboxylase.